The sequence spans 297 residues: Undecaprenyl-diphosphatase (297 aa).

The next 7 helical transmembrane spans lie at 58-78 (PGVA…LSYF), 103-123 (AQMG…GLLI), 138-158 (LAAI…AEQL), 168-188 (LRLA…IPGV), 208-228 (AARF…LVEL), 243-263 (VLAI…AWLL), and 274-294 (FVVY…TGTL).

Belongs to the UppP family.

It is found in the cell inner membrane. The enzyme catalyses di-trans,octa-cis-undecaprenyl diphosphate + H2O = di-trans,octa-cis-undecaprenyl phosphate + phosphate + H(+). Functionally, catalyzes the dephosphorylation of undecaprenyl diphosphate (UPP). Confers resistance to bacitracin. This is Undecaprenyl-diphosphatase from Synechococcus sp. (strain ATCC 27144 / PCC 6301 / SAUG 1402/1) (Anacystis nidulans).